A 75-amino-acid polypeptide reads, in one-letter code: Translational regulator CsrA (75 aa).

Belongs to the CsrA/RsmA family. In terms of assembly, homodimer; the beta-strands of each monomer intercalate to form a hydrophobic core, while the alpha-helices form wings that extend away from the core.

It is found in the cytoplasm. A translational regulator that binds mRNA to regulate translation initiation and/or mRNA stability. Usually binds in the 5'-UTR at or near the Shine-Dalgarno sequence preventing ribosome-binding, thus repressing translation. Its main target seems to be the major flagellin gene, while its function is anatagonized by FliW. This Treponema denticola (strain ATCC 35405 / DSM 14222 / CIP 103919 / JCM 8153 / KCTC 15104) protein is Translational regulator CsrA.